Reading from the N-terminus, the 382-residue chain is Succinyl-diaminopimelate desuccinylase (382 aa).

A Zn(2+)-binding site is contributed by H71. The active site involves D73. Position 105 (D105) interacts with Zn(2+). The Proton acceptor role is filled by E139. E140, E168, and H354 together coordinate Zn(2+).

Belongs to the peptidase M20A family. DapE subfamily. Homodimer. Zn(2+) serves as cofactor. It depends on Co(2+) as a cofactor.

It carries out the reaction N-succinyl-(2S,6S)-2,6-diaminopimelate + H2O = (2S,6S)-2,6-diaminopimelate + succinate. It participates in amino-acid biosynthesis; L-lysine biosynthesis via DAP pathway; LL-2,6-diaminopimelate from (S)-tetrahydrodipicolinate (succinylase route): step 3/3. In terms of biological role, catalyzes the hydrolysis of N-succinyl-L,L-diaminopimelic acid (SDAP), forming succinate and LL-2,6-diaminopimelate (DAP), an intermediate involved in the bacterial biosynthesis of lysine and meso-diaminopimelic acid, an essential component of bacterial cell walls. The protein is Succinyl-diaminopimelate desuccinylase of Stutzerimonas stutzeri (strain A1501) (Pseudomonas stutzeri).